We begin with the raw amino-acid sequence, 448 residues long: Damage-control phosphatase ARMT1 (448 aa).

Aspartate 257 and asparagine 258 together coordinate Mn(2+). Aspartate 257 to asparagine 258 is a substrate binding site. 2 residues coordinate S-adenosyl-L-methionine: glutamate 262 and aspartate 295. Aspartate 295 lines the Mn(2+) pocket. Substrate contacts are provided by residues aspartate 371–arginine 375 and lysine 408. Residues arginine 405–lysine 408 carry the Subfamily III RTxK motif motif.

It belongs to the damage-control phosphatase family. Sugar phosphate phosphatase III subfamily. The cofactor is Mn(2+). Requires Ni(2+) as cofactor. In terms of processing, automethylated.

The enzyme catalyses beta-D-fructose 1-phosphate + H2O = D-fructose + phosphate. The catalysed reaction is beta-D-fructose 6-phosphate = dihydroxyacetone + D-glyceraldehyde 3-phosphate. It catalyses the reaction L-glutamyl-[protein] + S-adenosyl-L-methionine = [protein]-L-glutamate 5-O-methyl ester + S-adenosyl-L-homocysteine. Functionally, metal-dependent phosphatase that shows phosphatase activity against several substrates, including fructose-1-phosphate and fructose-6-phosphate. Its preference for fructose-1-phosphate, a strong glycating agent that causes DNA damage rather than a canonical yeast metabolite, suggests a damage-control function in hexose phosphate metabolism. Has also been shown to have O-methyltransferase activity that methylates glutamate residues of target proteins to form gamma-glutamyl methyl ester residues. Possibly methylates PCNA, suggesting it is involved in the DNA damage response. This is Damage-control phosphatase ARMT1 from Danio rerio (Zebrafish).